A 743-amino-acid polypeptide reads, in one-letter code: Peptide transporter family 1 (743 aa).

Residues 1-28 (MASEITNGKNGQNGKNGQKEESDSQIAP) form a disordered region. Residues 7 to 16 (NGKNGQNGKN) are compositionally biased toward low complexity. Helical transmembrane passes span 74 to 94 (VLFHTFTMLVYIFPLIGALIA), 104 to 124 (ILYLSLVYSLGAMVVSFGAVP), 132 to 152 (AVTVVGLLLIAIGTGGIKPCV), 173 to 193 (FSLFYFAINAGSLISTTFTPI), 207 to 227 (FSLAFGVPAILMIFSVIIFMA), 334 to 354 (VVNPLLILGFLPLFDYIIYPA), 364 to 384 (LQKLTLGLLLAALGFFLSAGL), 597 to 619 (LPQIVVMTAAEVMFSVTGLEFSY), 629 to 649 (VLQACWLLSVAIGNMLVVVIA), and 659 to 679 (GEFTLFASLMLVDMMIFLWLA).

Belongs to the major facilitator superfamily. Proton-dependent oligopeptide transporter (POT/PTR) (TC 2.A.17) family. As to expression, expressed in thorax and abdomen of females: apical epithelial membranes of midgut, rectum, and reproductive tract. Also expressed in neuropil of the central nervous system, with elevated expression within the alpha- and beta-lobes of the mushroom bodies.

It localises to the membrane. Important role in absorption of dietary peptides. High-affinity transporter of alanylalanine. Dipeptide transport activity is proton dependent. The polypeptide is Peptide transporter family 1 (yin) (Drosophila melanogaster (Fruit fly)).